A 125-amino-acid chain; its full sequence is Methylglyoxal synthase (125 aa).

The MGS-like domain occupies 1–125 (MTQRLRIALI…TAEKLVRALD (125 aa)). Residues H12, K16, 38–41 (TGTT), and 59–60 (SG) contribute to the substrate site. The active-site Proton donor/acceptor is D65. H92 lines the substrate pocket.

This sequence belongs to the methylglyoxal synthase family.

The enzyme catalyses dihydroxyacetone phosphate = methylglyoxal + phosphate. In terms of biological role, catalyzes the formation of methylglyoxal from dihydroxyacetone phosphate. This chain is Methylglyoxal synthase, found in Brucella abortus (strain S19).